The chain runs to 173 residues: Ribulose bisphosphate carboxylase small subunit, chloroplastic 7 (173 aa).

The transit peptide at 1 to 49 (MASIPATVATVAQANMVAPFTGLKSNAAFPVTKKVNDFSTLASNGGRVQ) directs the protein to the chloroplast.

This sequence belongs to the RuBisCO small chain family. In terms of assembly, heterohexadecamer of 8 large and 8 small subunits.

It localises to the plastid. It is found in the chloroplast. Its function is as follows. RuBisCO catalyzes two reactions: the carboxylation of D-ribulose 1,5-bisphosphate, the primary event in carbon dioxide fixation, as well as the oxidative fragmentation of the pentose substrate. Both reactions occur simultaneously and in competition at the same active site. Although the small subunit is not catalytic it is essential for maximal activity. The sequence is that of Ribulose bisphosphate carboxylase small subunit, chloroplastic 7 from Flaveria pringlei.